The primary structure comprises 347 residues: E3 ubiquitin-protein ligase ARK2C (347 aa).

2 disordered regions span residues 23–79 (PFQR…GTLH) and 268–289 (PHKY…GEES). Residues 267-269 (FPH) form a ubiquitin binding region. The segment covering 276-285 (PQDSKGKKDE) has biased composition (basic and acidic residues). Zn(2+)-binding residues include Cys-295 and Cys-298. Residues 295 to 336 (CTICLSMLEDGEDVRRLPCMHLFHQLCVDQWLAMSKKCPICR) form an RING-type; atypical zinc finger. The segment at 310–314 (RLPCM) is ubiquitin binding. Zn(2+) contacts are provided by His-318 and Cys-321.

It belongs to the Arkadia family. Monomer; binding to the ubiquitin-conjugating enzyme E2 does not trigger homodimerization. As to expression, expressed in neurons of the nervous system.

It localises to the nucleus. The enzyme catalyses S-ubiquitinyl-[E2 ubiquitin-conjugating enzyme]-L-cysteine + [acceptor protein]-L-lysine = [E2 ubiquitin-conjugating enzyme]-L-cysteine + N(6)-ubiquitinyl-[acceptor protein]-L-lysine.. Its activity is regulated as follows. Binds free ubiquitin non-covalently via its RING-type zinc finger. Ubiquitin-binding leads to enhance the E3 ubiquitin-protein ligase activity by stabilizing the ubiquitin-conjugating enzyme E2 (donor ubiquitin) in the 'closed' conformation and activating ubiquitin transfer. E3 ubiquitin-protein ligase that acts as a regulator of motor axon elongation. Required for efficient motor axon extension in the dorsal forelimb by enhancing the transcriptional responses of the SMAD1/SMAD5/SMAD8 effectors, which are activated downstream of BMP. Acts by mediating ubiquitination and degradation of SMAD inhibitors such as SMAD6, SMAD7, SKI and SNON isoform of SKIL. The chain is E3 ubiquitin-protein ligase ARK2C from Mus musculus (Mouse).